Here is a 467-residue protein sequence, read N- to C-terminus: Mitochondrial distribution and morphology protein 10 (467 aa).

Belongs to the MDM10 family. Component of the ER-mitochondria encounter structure (ERMES) or MDM complex, composed of MMM1, MDM10, MDM12 and MDM34. Associates with the mitochondrial outer membrane sorting assembly machinery SAM(core) complex.

It is found in the mitochondrion outer membrane. Functionally, component of the ERMES/MDM complex, which serves as a molecular tether to connect the endoplasmic reticulum and mitochondria. Components of this complex are involved in the control of mitochondrial shape and protein biogenesis and may function in phospholipid exchange. MDM10 is involved in the late assembly steps of the general translocase of the mitochondrial outer membrane (TOM complex). Functions in the TOM40-specific route of the assembly of outer membrane beta-barrel proteins, including the association of TOM40 with the receptor TOM22 and small TOM proteins. Can associate with the SAM(core) complex as well as the MDM12-MMM1 complex, both involved in late steps of the major beta-barrel assembly pathway, that is responsible for biogenesis of all outer membrane beta-barrel proteins. May act as a switch that shuttles between both complexes and channels precursor proteins into the TOM40-specific pathway. Plays a role in mitochondrial morphology and in the inheritance of mitochondria. The chain is Mitochondrial distribution and morphology protein 10 from Ajellomyces capsulatus (strain G186AR / H82 / ATCC MYA-2454 / RMSCC 2432) (Darling's disease fungus).